Consider the following 305-residue polypeptide: Oxygen-dependent coproporphyrinogen-III oxidase (305 aa).

Serine 92 is a substrate binding site. A divalent metal cation contacts are provided by histidine 96 and histidine 106. The active-site Proton donor is the histidine 106. 108–110 (NVR) provides a ligand contact to substrate. A divalent metal cation contacts are provided by histidine 145 and histidine 175. An important for dimerization region spans residues 239–274 (YVEFNLLFDRGTLFGLQSGGRAESILISLPPLVRWE). A substrate-binding site is contributed by 257-259 (GGR).

This sequence belongs to the aerobic coproporphyrinogen-III oxidase family. In terms of assembly, homodimer. A divalent metal cation is required as a cofactor.

It localises to the cytoplasm. The enzyme catalyses coproporphyrinogen III + O2 + 2 H(+) = protoporphyrinogen IX + 2 CO2 + 2 H2O. Its pathway is porphyrin-containing compound metabolism; protoporphyrin-IX biosynthesis; protoporphyrinogen-IX from coproporphyrinogen-III (O2 route): step 1/1. Functionally, involved in the heme biosynthesis. Catalyzes the aerobic oxidative decarboxylation of propionate groups of rings A and B of coproporphyrinogen-III to yield the vinyl groups in protoporphyrinogen-IX. This chain is Oxygen-dependent coproporphyrinogen-III oxidase, found in Xylella fastidiosa (strain Temecula1 / ATCC 700964).